Consider the following 133-residue polypeptide: Small ribosomal subunit protein uS9 (133 aa).

Residues 98–113 (RKPLKTEGHLSRDPRA) are compositionally biased toward basic and acidic residues. A disordered region spans residues 98–133 (RKPLKTEGHLSRDPRAKERRKYGLKKARKAPQFSKR). Over residues 114 to 133 (KERRKYGLKKARKAPQFSKR) the composition is skewed to basic residues.

The protein belongs to the universal ribosomal protein uS9 family.

The chain is Small ribosomal subunit protein uS9 from Synechococcus sp. (strain CC9902).